Consider the following 151-residue polypeptide: Large ribosomal subunit protein bL9 (151 aa).

The protein belongs to the bacterial ribosomal protein bL9 family.

Binds to the 23S rRNA. In Pelobacter propionicus (strain DSM 2379 / NBRC 103807 / OttBd1), this protein is Large ribosomal subunit protein bL9.